The following is a 116-amino-acid chain: Large ribosomal subunit protein bL20 (116 aa).

It belongs to the bacterial ribosomal protein bL20 family.

Functionally, binds directly to 23S ribosomal RNA and is necessary for the in vitro assembly process of the 50S ribosomal subunit. It is not involved in the protein synthesizing functions of that subunit. In Helicobacter acinonychis (strain Sheeba), this protein is Large ribosomal subunit protein bL20.